We begin with the raw amino-acid sequence, 458 residues long: Histidine--tRNA ligase (458 aa).

The protein belongs to the class-II aminoacyl-tRNA synthetase family. In terms of assembly, homodimer.

It localises to the cytoplasm. The catalysed reaction is tRNA(His) + L-histidine + ATP = L-histidyl-tRNA(His) + AMP + diphosphate + H(+). This Micrococcus luteus (strain ATCC 4698 / DSM 20030 / JCM 1464 / CCM 169 / CCUG 5858 / IAM 1056 / NBRC 3333 / NCIMB 9278 / NCTC 2665 / VKM Ac-2230) (Micrococcus lysodeikticus) protein is Histidine--tRNA ligase.